A 239-amino-acid polypeptide reads, in one-letter code: Ribosomal RNA small subunit methyltransferase G (239 aa).

S-adenosyl-L-methionine-binding positions include glycine 77, phenylalanine 82, 128-129 (AE), and arginine 147.

It belongs to the methyltransferase superfamily. RNA methyltransferase RsmG family.

The protein resides in the cytoplasm. In terms of biological role, specifically methylates the N7 position of guanine in position 535 of 16S rRNA. The chain is Ribosomal RNA small subunit methyltransferase G from Bacillus cereus (strain G9842).